Here is a 93-residue protein sequence, read N- to C-terminus: Envelope small membrane protein (93 aa).

Residues 1–11 lie on the Virion surface side of the membrane; it reads MMNLLNKSLEE. A helical membrane pass occupies residues 12–32; the sequence is NGSVLTAFYIFVAFVALYLLG. The Intravirion segment spans residues 33-93; it reads RALQAFVQAA…NEFPKNGWKQ (61 aa).

This sequence belongs to the gammacoronaviruses E protein family. In terms of assembly, homooligomer. Interacts with the M membrane protein in the budding compartment of the host cell, which is located between endoplasmic reticulum and the Golgi complex. The cytoplasmic tails of both proteins are important for this function. Interacts with Nucleoprotein.

The protein localises to the host Golgi apparatus membrane. Its function is as follows. Plays a central role in virus morphogenesis and assembly. Acts as a viroporin and self-assembles in host membranes forming pentameric protein-lipid pores that allow ion transport. Also plays a role in the induction of apoptosis. The chain is Envelope small membrane protein from Avian infectious bronchitis virus (strain Portugal/322/82) (IBV).